The sequence spans 572 residues: SHUGOSHIN 1 (572 aa).

Residues 59–110 (KHQQQAILISSKENAENLQKENTKLMKVVMERDGIKSDLKKLRIEFQKVQEQ) adopt a coiled-coil conformation. Disordered regions lie at residues 185–221 (DADHEHASGSSNANSLQRNEKANSKRRVSGRKNPANS), 244–285 (KLVS…QTET), 333–352 (ARLKSQEPEPSESFHDSIET), and 484–572 (SRRQ…RGGF). Residues 192-201 (SGSSNANSLQ) show a composition bias toward polar residues. Composition is skewed to basic and acidic residues over residues 244 to 257 (KLVSDSDNDAENHI), 336 to 352 (KSQEPEPSESFHDSIET), 523 to 542 (ELKRESKKKPTGDESEEMRK), and 552 to 572 (AAEKIKSYKEPSLKEKMRGGF).

Belongs to the shugoshin family.

Protects sister chromatid centromere cohesion in meiosis I but not through the protection of the cohesin SYN1. Required with SGO2 for full protection of centromeric cohesion during anaphase I. Required to prevent precocious release of pericentromeric cohesins during meiosis. Not necessary for the maintenance of the synaptonemal complex (SC). Not required for monopolar spindle orientation in meiosis I. This is SHUGOSHIN 1 from Arabidopsis thaliana (Mouse-ear cress).